A 358-amino-acid chain; its full sequence is Transcription factor PCF6 (358 aa).

The disordered stretch occupies residues 1–29 (MEAAVGDGEGGGGGGGRGKRGRGGGGGEM). Residues 7–16 (DGEGGGGGGG) are compositionally biased toward gly residues. Residues 52–110 (GKDRHSKVYTAKGIRDRRVRLSVATAIQFYDLQDRLGFDQPSKAIEWLINAASPAIDTL) form the TCP domain. 2 disordered regions span residues 127-163 (ADAA…DKEV) and 282-308 (ANRG…QQLQ). 2 stretches are compositionally biased toward polar residues: residues 143–156 (LSNK…SETS) and 285–296 (GTLQSNSPSNMS).

Forms homodimers and heterodimers.

It localises to the nucleus. In terms of biological role, transcription activator. Binds the promoter core sequence 5'-GGNCC-3'. This is Transcription factor PCF6 (PCF6) from Oryza sativa subsp. indica (Rice).